The following is a 110-amino-acid chain: Iron-sulfur cluster assembly protein CyaY (110 aa).

The protein belongs to the frataxin family.

Functionally, involved in iron-sulfur (Fe-S) cluster assembly. May act as a regulator of Fe-S biogenesis. This is Iron-sulfur cluster assembly protein CyaY from Pseudomonas entomophila (strain L48).